Consider the following 269-residue polypeptide: Formamidopyrimidine-DNA glycosylase (269 aa).

Residue Pro2 is the Schiff-base intermediate with DNA of the active site. Residue Glu3 is the Proton donor of the active site. Lys58 acts as the Proton donor; for beta-elimination activity in catalysis. DNA is bound by residues His91, Arg110, and Lys150. The segment at 235 to 269 (SVYGCKNKKCYRCKGIIIKFVQNQRSTFYCKKCQT) adopts an FPG-type zinc-finger fold. The Proton donor; for delta-elimination activity role is filled by Arg259.

This sequence belongs to the FPG family. In terms of assembly, monomer. Zn(2+) is required as a cofactor.

The catalysed reaction is Hydrolysis of DNA containing ring-opened 7-methylguanine residues, releasing 2,6-diamino-4-hydroxy-5-(N-methyl)formamidopyrimidine.. It catalyses the reaction 2'-deoxyribonucleotide-(2'-deoxyribose 5'-phosphate)-2'-deoxyribonucleotide-DNA = a 3'-end 2'-deoxyribonucleotide-(2,3-dehydro-2,3-deoxyribose 5'-phosphate)-DNA + a 5'-end 5'-phospho-2'-deoxyribonucleoside-DNA + H(+). Involved in base excision repair of DNA damaged by oxidation or by mutagenic agents. Acts as a DNA glycosylase that recognizes and removes damaged bases. Has a preference for oxidized purines, such as 7,8-dihydro-8-oxoguanine (8-oxoG). Has AP (apurinic/apyrimidinic) lyase activity and introduces nicks in the DNA strand. Cleaves the DNA backbone by beta-delta elimination to generate a single-strand break at the site of the removed base with both 3'- and 5'-phosphates. The polypeptide is Formamidopyrimidine-DNA glycosylase (Vesicomyosocius okutanii subsp. Calyptogena okutanii (strain HA)).